A 510-amino-acid polypeptide reads, in one-letter code: Maturase K (510 aa).

This sequence belongs to the intron maturase 2 family. MatK subfamily.

The protein localises to the plastid. It is found in the chloroplast. Functionally, usually encoded in the trnK tRNA gene intron. Probably assists in splicing its own and other chloroplast group II introns. The chain is Maturase K from Anomochloa marantoidea (Herbaceous bamboo).